The chain runs to 389 residues: Alpha-2B adrenergic receptor (389 aa).

A helical transmembrane segment spans residues 1–25 (AIAAVITFLILFTIFGNALVILAVL). At 26-36 (TSRSLRAPQNL) the chain is on the cytoplasmic side. The chain crosses the membrane as a helical span at residues 37–62 (FLVSLAAADILVATLIIPFSLANELL). At 63–72 (GYWYFWRTWC) the chain is on the extracellular side. C72 and C151 are oxidised to a cystine. A helical transmembrane segment spans residues 73-95 (EVYLALDVLFCTSSIVHLCAISL). Topologically, residues 96–117 (DRYWAVSRALEYNSKRTPRRIK) are cytoplasmic. The helical transmembrane segment at 118–140 (CIILTVWLIAAAISLPPLIYKGD) threads the bilayer. At 141–156 (QGPQPRGRPQCMLNQE) the chain is on the extracellular side. Residues 157–180 (AWYILSSSIGSFFAPCLIMILVYL) form a helical membrane-spanning segment. The Cytoplasmic segment spans residues 181–353 (RIYLIAKRSN…LTREKRFTFV (173 aa)). Disordered regions lie at residues 192–218 (RGPRAKGAPGEGESKQPHPLTAGPLAL) and 231–310 (DGEA…HLQQ). Residues 234–249 (ANGHSKLTGEKERETS) are compositionally biased toward basic and acidic residues. The chain crosses the membrane as a helical span at residues 354–377 (LTVVIGVFVLCWFPFFFSYSLGAI). Residues 378 to 386 (CPQHCKVPH) lie on the Extracellular side of the membrane. The chain crosses the membrane as a helical span at residues 387–389 (GLF).

The protein belongs to the G-protein coupled receptor 1 family. Adrenergic receptor subfamily. ADRA2B sub-subfamily. Interacts with RAB26. Interacts with PPP1R9B.

It localises to the cell membrane. In terms of biological role, alpha-2 adrenergic receptors mediate the catecholamine-induced inhibition of adenylate cyclase through the action of G proteins. The polypeptide is Alpha-2B adrenergic receptor (ADRA2B) (Procavia capensis habessinica (Abyssinian hyrax)).